The chain runs to 438 residues: Probable tRNA pseudouridine synthase D (438 aa).

Asp86 acts as the Nucleophile in catalysis. Positions 165-390 constitute a TRUD domain; the sequence is GVPNFFGIQR…SKGTRRELLL (226 aa).

This sequence belongs to the pseudouridine synthase TruD family.

The enzyme catalyses uridine(13) in tRNA = pseudouridine(13) in tRNA. In terms of biological role, could be responsible for synthesis of pseudouridine from uracil-13 in transfer RNAs. The polypeptide is Probable tRNA pseudouridine synthase D (Methanosarcina barkeri (strain Fusaro / DSM 804)).